A 363-amino-acid polypeptide reads, in one-letter code: Carbamoyl phosphate synthase small chain (363 aa).

The segment at 1-173 (MMKAFLVLDN…SKYIFGTHTG (173 aa)) is CPSase. Ser-46, Gly-225, and Gly-227 together coordinate L-glutamine. Residues 177-363 (KLAVYDYGVK…YDLVEKTKKG (187 aa)) enclose the Glutamine amidotransferase type-1 domain. Cys-253 serves as the catalytic Nucleophile. Residues Leu-254, Gln-257, Asn-295, Gly-297, and Phe-298 each contribute to the L-glutamine site. Residues His-336 and Glu-338 contribute to the active site.

The protein belongs to the CarA family. Composed of two chains; the small (or glutamine) chain promotes the hydrolysis of glutamine to ammonia, which is used by the large (or ammonia) chain to synthesize carbamoyl phosphate. Tetramer of heterodimers (alpha,beta)4.

It catalyses the reaction hydrogencarbonate + L-glutamine + 2 ATP + H2O = carbamoyl phosphate + L-glutamate + 2 ADP + phosphate + 2 H(+). The enzyme catalyses L-glutamine + H2O = L-glutamate + NH4(+). The protein operates within amino-acid biosynthesis; L-arginine biosynthesis; carbamoyl phosphate from bicarbonate: step 1/1. It participates in pyrimidine metabolism; UMP biosynthesis via de novo pathway; (S)-dihydroorotate from bicarbonate: step 1/3. Small subunit of the glutamine-dependent carbamoyl phosphate synthetase (CPSase). CPSase catalyzes the formation of carbamoyl phosphate from the ammonia moiety of glutamine, carbonate, and phosphate donated by ATP, constituting the first step of 2 biosynthetic pathways, one leading to arginine and/or urea and the other to pyrimidine nucleotides. The small subunit (glutamine amidotransferase) binds and cleaves glutamine to supply the large subunit with the substrate ammonia. The protein is Carbamoyl phosphate synthase small chain of Leptospira interrogans serogroup Icterohaemorrhagiae serovar copenhageni (strain Fiocruz L1-130).